The primary structure comprises 83 residues: Kappa-theraphotoxin-Cg2a (83 aa).

Residues Met-1–Ala-21 form the signal peptide. Positions Glu-22 to Arg-53 are excised as a propeptide. 3 cysteine pairs are disulfide-bonded: Cys-55–Cys-69, Cys-62–Cys-74, and Cys-68–Cys-78. Leu-82 carries the post-translational modification Leucine amide.

Belongs to the neurotoxin 30 (phrixotoxin) family. As to expression, expressed by the venom gland.

It is found in the secreted. Its function is as follows. Inhibits voltage-gated potassium channels of the subtype Kv4.1/KCND1 with high affinity and shows weak effects on Kv4.2/KCND2 and Kv2.1/KCNB1 subtypes. The toxin modifies the gating behavior of the channel and may interact with the S3-S4 extracellular loop. The chain is Kappa-theraphotoxin-Cg2a from Chilobrachys guangxiensis (Chinese earth tiger tarantula).